Reading from the N-terminus, the 630-residue chain is WD repeat-containing protein 26 homolog (630 aa).

Positions 1-13 (MQSTSSTSSGSCS) are enriched in low complexity. Residues 1-90 (MQSTSSTSSG…NNRENTSCSG (90 aa)) form a disordered region. Residues S36 and S40 each carry the phosphoserine modification. Composition is skewed to polar residues over residues 48-57 (PSGSSAATNG) and 66-75 (IVNNNGSSSR). A LisH domain is found at 96–128 (SNQEIIRLIGQYLHDVGLDKSVQTLMLESGCYL). The region spanning 129–190 (EHPSATKFRE…EHLDDGNPLD (62 aa)) is the CTLH domain. WD repeat units lie at residues 312 to 351 (DHCD…LTLK), 359 to 400 (QAQL…LVVK), 404 to 443 (SLED…VDSW), 445 to 482 (GVRV…SDFD), 485 to 524 (REPH…LVRR), 529 to 569 (RQSN…PLAK), and 572 to 612 (GHTK…SSAT). The tract at residues 604-630 (PKPNGSSATTESDDCSSSSSSSSWNMT) is disordered. A compositionally biased stretch (low complexity) spans 609–630 (SSATTESDDCSSSSSSSSWNMT).

Its subcellular location is the cytoplasm. The protein resides in the mitochondrion. Functionally, G-beta-like protein involved in cell signal transduction. The chain is WD repeat-containing protein 26 homolog from Drosophila melanogaster (Fruit fly).